Here is a 585-residue protein sequence, read N- to C-terminus: Nitrogen permease regulator 3-like protein (585 aa).

Positions 117 to 157 are disordered; that stretch reads GEWAKRRKPRTTVESNASSSHLVSKPESSHPSTGSFEVKSS. Over residues 128–138 the composition is skewed to polar residues; sequence TVESNASSSHL. The span at 148–157 shows a compositional bias: low complexity; sequence STGSFEVKSS.

This sequence belongs to the NPR3 family.

The chain is Nitrogen permease regulator 3-like protein from Schizosaccharomyces pombe (strain 972 / ATCC 24843) (Fission yeast).